An 899-amino-acid polypeptide reads, in one-letter code: Receptor-like protein kinase At3g21340 (899 aa).

The N-terminal stretch at 1 to 27 (MEYHPQAIRLCALIFISFYALLHLVEA) is a signal peptide. Residues 28–522 (QDQKGFISLD…GAKKMNVVIP (495 aa)) are Extracellular-facing. 10 N-linked (GlcNAc...) asparagine glycosylation sites follow: Asn100, Asn146, Asn185, Asn240, Asn266, Asn420, Asn436, Asn449, Asn468, and Asn475. 3 LRR repeats span residues 415 to 438 (IVTS…QNLT), 439 to 461 (HLQE…LADI), and 463 to 485 (SLLV…LLQK). The helical transmembrane segment at 523–543 (IVASVAFVVVLGSALAFFFIF) threads the bilayer. Residues 544–899 (KKKKTSNSQD…FDIGATPDAR (356 aa)) lie on the Cytoplasmic side of the membrane. The residue at position 583 (Thr583) is a Phosphothreonine. A Protein kinase domain is found at 592–865 (NNFERVLGKG…QVVIELNECL (274 aa)). Residues 598–606 (LGKGGFGMV) and Lys620 each bind ATP. Tyr665 carries the phosphotyrosine modification. The Proton acceptor role is filled by Asp717. Residue Ser751 is modified to Phosphoserine. Phosphothreonine is present on residues Thr752 and Thr757. Phosphotyrosine is present on Tyr765.

This sequence belongs to the protein kinase superfamily. Ser/Thr protein kinase family. In terms of processing, autophosphorylated on Tyr and Thr residues.

The protein resides in the cell membrane. It carries out the reaction L-seryl-[protein] + ATP = O-phospho-L-seryl-[protein] + ADP + H(+). The catalysed reaction is L-threonyl-[protein] + ATP = O-phospho-L-threonyl-[protein] + ADP + H(+). The enzyme catalyses L-tyrosyl-[protein] + ATP = O-phospho-L-tyrosyl-[protein] + ADP + H(+). Probable receptor with a dual specificity kinase activity acting on both serine/threonine- and tyrosine-containing substrates. This is Receptor-like protein kinase At3g21340 from Arabidopsis thaliana (Mouse-ear cress).